The primary structure comprises 264 residues: Fructose-1,6-bisphosphatase/inositol-1-monophosphatase (264 aa).

Mg(2+)-binding residues include glutamate 70, aspartate 86, leucine 88, and aspartate 89. Residues 89–91 (DGT), arginine 185, and alanine 190 contribute to the substrate site. Position 214 (aspartate 214) interacts with Mg(2+).

Belongs to the inositol monophosphatase superfamily. FBPase class 4 family. Requires Mg(2+) as cofactor.

The enzyme catalyses beta-D-fructose 1,6-bisphosphate + H2O = beta-D-fructose 6-phosphate + phosphate. The catalysed reaction is a myo-inositol phosphate + H2O = myo-inositol + phosphate. In terms of biological role, phosphatase with broad specificity; it can dephosphorylate fructose 1,6-bisphosphate, and both D and L isomers of inositol-1-phosphate (I-1-P). This is Fructose-1,6-bisphosphatase/inositol-1-monophosphatase (suhB) from Aquifex aeolicus (strain VF5).